A 159-amino-acid chain; its full sequence is MSLIRRGNAFDPFSLDLWDPVDGFPFGSGGSSSSSGSLFPRANSDAAAFAGARIDWKETPEVHVFKADVPGLKKEEVKVEVDDGNILQISGERSREQEEKSDKWHRVERSSGKFLRRFRLPENTKPEQIKASMENGVLTVTVPKEEPKKPDVKSIQISG.

Residues 45–159 enclose the sHSP domain; the sequence is DAAAFAGARI…PDVKSIQISG (115 aa).

The protein belongs to the small heat shock protein (HSP20) family. May form oligomeric structures.

It localises to the cytoplasm. This chain is 17.7 kDa class I heat shock protein (HSP17.7), found in Oryza sativa subsp. japonica (Rice).